The chain runs to 476 residues: Probable secreted beta-glucosidase SIM1 (476 aa).

The N-terminal stretch at 1 to 19 (MKFSTAVTTLISSGAIVSA) is a signal peptide. The span at 111–203 (ATASTSQGAS…SSSSSSSGSG (93 aa)) shows a compositional bias: low complexity. The disordered stretch occupies residues 111-214 (ATASTSQGAS…IYGDLADFSG (104 aa)). N-linked (GlcNAc...) asparagine glycosylation is present at Asn423.

The protein belongs to the SUN family.

It is found in the secreted. The protein resides in the cell wall. Functionally, involved in the remodeling of the cell wall during the various phases of yeast culture development and under various environmental conditions. Required for the maintenance of the CLB5 kinase activity. The sequence is that of Probable secreted beta-glucosidase SIM1 (SIM1) from Saccharomyces cerevisiae (strain ATCC 204508 / S288c) (Baker's yeast).